The chain runs to 199 residues: Probable nicotinate-nucleotide adenylyltransferase (199 aa).

Belongs to the NadD family.

The enzyme catalyses nicotinate beta-D-ribonucleotide + ATP + H(+) = deamido-NAD(+) + diphosphate. Its pathway is cofactor biosynthesis; NAD(+) biosynthesis; deamido-NAD(+) from nicotinate D-ribonucleotide: step 1/1. Catalyzes the reversible adenylation of nicotinate mononucleotide (NaMN) to nicotinic acid adenine dinucleotide (NaAD). This Rhizobium johnstonii (strain DSM 114642 / LMG 32736 / 3841) (Rhizobium leguminosarum bv. viciae) protein is Probable nicotinate-nucleotide adenylyltransferase.